Here is a 479-residue protein sequence, read N- to C-terminus: Probable glycine dehydrogenase (decarboxylating) subunit 2 (479 aa).

Residue K265 is modified to N6-(pyridoxal phosphate)lysine.

This sequence belongs to the GcvP family. C-terminal subunit subfamily. As to quaternary structure, the glycine cleavage system is composed of four proteins: P, T, L and H. In this organism, the P 'protein' is a heterodimer of two subunits. Requires pyridoxal 5'-phosphate as cofactor.

The enzyme catalyses N(6)-[(R)-lipoyl]-L-lysyl-[glycine-cleavage complex H protein] + glycine + H(+) = N(6)-[(R)-S(8)-aminomethyldihydrolipoyl]-L-lysyl-[glycine-cleavage complex H protein] + CO2. In terms of biological role, the glycine cleavage system catalyzes the degradation of glycine. The P protein binds the alpha-amino group of glycine through its pyridoxal phosphate cofactor; CO(2) is released and the remaining methylamine moiety is then transferred to the lipoamide cofactor of the H protein. The protein is Probable glycine dehydrogenase (decarboxylating) subunit 2 of Pseudothermotoga lettingae (strain ATCC BAA-301 / DSM 14385 / NBRC 107922 / TMO) (Thermotoga lettingae).